Reading from the N-terminus, the 385-residue chain is Calcium/calmodulin-dependent protein kinase type 1D (385 aa).

Residues 23–279 (FEFKETLGTG…CEQAARHPWI (257 aa)) enclose the Protein kinase domain. ATP contacts are provided by residues 29–37 (LGTGAFSEV) and Lys52. A Glycyl lysine isopeptide (Lys-Gly) (interchain with G-Cter in SUMO2) cross-link involves residue Lys113. Ser122 bears the Phosphoserine mark. Asp144 acts as the Proton acceptor in catalysis. Position 180 is a phosphothreonine; by CaMKK1 and CaMKK2 (Thr180). The tract at residues 279–319 (IAGDTALNKNIHESVSAQIRKNFAKSKWRQAFNATAVVRHM) is autoinhibitory domain. A calmodulin-binding region spans residues 299-320 (KNFAKSKWRQAFNATAVVRHMR). A Nuclear export signal motif is present at residues 318–324 (HMRKLHL). A disordered region spans residues 360 to 385 (SSGVSGVGAERRPRPTTVTAVHSGSK). The segment covering 375 to 385 (TTVTAVHSGSK) has biased composition (polar residues).

This sequence belongs to the protein kinase superfamily. CAMK Ser/Thr protein kinase family. CaMK subfamily. Widely expressed. Highly and mostly expressed in polymorphonuclear leukocytes (neutrophilic and eosinophilic granulocytes) while little or no expression is observed in monocytes and lymphocytes.

It localises to the cytoplasm. The protein localises to the nucleus. It carries out the reaction L-seryl-[protein] + ATP = O-phospho-L-seryl-[protein] + ADP + H(+). The enzyme catalyses L-threonyl-[protein] + ATP = O-phospho-L-threonyl-[protein] + ADP + H(+). Activated by Ca(2+)/calmodulin. Binding of calmodulin results in conformational change that relieves intrasteric autoinhibition and allows phosphorylation of Thr-180 within the activation loop by CaMKK1 or CaMKK2. Phosphorylation of Thr-180 results in several fold increase in total activity. Unlike CaMK4, may be unable to exhibit autonomous activity after Ca(2+)/calmodulin activation. In terms of biological role, calcium/calmodulin-dependent protein kinase that operates in the calcium-triggered CaMKK-CaMK1 signaling cascade and, upon calcium influx, activates CREB-dependent gene transcription, regulates calcium-mediated granulocyte function and respiratory burst and promotes basal dendritic growth of hippocampal neurons. In neutrophil cells, required for cytokine-induced proliferative responses and activation of the respiratory burst. Activates the transcription factor CREB1 in hippocampal neuron nuclei. May play a role in apoptosis of erythroleukemia cells. In vitro, phosphorylates transcription factor CREM isoform Beta. The chain is Calcium/calmodulin-dependent protein kinase type 1D (CAMK1D) from Homo sapiens (Human).